A 286-amino-acid polypeptide reads, in one-letter code: Elongation factor Ts (286 aa).

Residues 82–85 (TDFV) are involved in Mg(2+) ion dislocation from EF-Tu. The disordered stretch occupies residues 212–286 (VAAQTGQKVE…SPSKKGKKKK (75 aa)). Residues 215–227 (QTGQKVEQPQAAQ) show a composition bias toward polar residues. Over residues 253-269 (ETDSPAAETTTEPPKTT) the composition is skewed to low complexity.

Belongs to the EF-Ts family.

It is found in the cytoplasm. Associates with the EF-Tu.GDP complex and induces the exchange of GDP to GTP. It remains bound to the aminoacyl-tRNA.EF-Tu.GTP complex up to the GTP hydrolysis stage on the ribosome. The polypeptide is Elongation factor Ts (Gloeothece citriformis (strain PCC 7424) (Cyanothece sp. (strain PCC 7424))).